The sequence spans 430 residues: Gamma-glutamyl phosphate reductase (430 aa).

The protein belongs to the gamma-glutamyl phosphate reductase family.

It is found in the cytoplasm. The catalysed reaction is L-glutamate 5-semialdehyde + phosphate + NADP(+) = L-glutamyl 5-phosphate + NADPH + H(+). Its pathway is amino-acid biosynthesis; L-proline biosynthesis; L-glutamate 5-semialdehyde from L-glutamate: step 2/2. Functionally, catalyzes the NADPH-dependent reduction of L-glutamate 5-phosphate into L-glutamate 5-semialdehyde and phosphate. The product spontaneously undergoes cyclization to form 1-pyrroline-5-carboxylate. The sequence is that of Gamma-glutamyl phosphate reductase from Corynebacterium diphtheriae (strain ATCC 700971 / NCTC 13129 / Biotype gravis).